The chain runs to 523 residues: Tyrosine ammonia-lyase (523 aa).

The active-site Proton donor/acceptor is the tyrosine 60. Histidine 89 is a binding site for substrate. The 5-imidazolinone (Ala-Gly) cross-link spans alanine 149–glycine 151. Serine 150 is subject to 2,3-didehydroalanine (Ser). Residues arginine 303 and asparagine 432–glutamine 436 each bind substrate.

It belongs to the PAL/histidase family. Homotetramer. Post-translationally, contains an active site 4-methylidene-imidazol-5-one (MIO), which is formed autocatalytically by cyclization and dehydration of residues Ala-Ser-Gly.

The catalysed reaction is L-tyrosine = (E)-4-coumarate + NH4(+). Functionally, catalyzes the non-oxidative deamination of L-tyrosine. Has very low phenylalanine ammonia-lyase activity (in vitro). In Cereibacter sphaeroides (strain ATCC 17023 / DSM 158 / JCM 6121 / CCUG 31486 / LMG 2827 / NBRC 12203 / NCIMB 8253 / ATH 2.4.1.) (Rhodobacter sphaeroides), this protein is Tyrosine ammonia-lyase (hutH).